The following is an 897-amino-acid chain: Leucine--tRNA ligase (897 aa).

Positions 42–52 match the 'HIGH' region motif; that stretch reads PYPSGKLHMGH. The 'KMSKS' region signature appears at 645–649; sequence TMSKS. Position 648 (lysine 648) interacts with ATP.

Belongs to the class-I aminoacyl-tRNA synthetase family.

Its subcellular location is the cytoplasm. It carries out the reaction tRNA(Leu) + L-leucine + ATP = L-leucyl-tRNA(Leu) + AMP + diphosphate. The chain is Leucine--tRNA ligase from Paracidovorax citrulli (strain AAC00-1) (Acidovorax citrulli).